Reading from the N-terminus, the 350-residue chain is MRASQSPMLDPRTRQLLRTLIARYIRDGEPVGSKTLAQHAGLDVSPATIRNILADLEDVGLLSSPHTSAGRVPTAHGYRVFVDSLVQMQPPGEEEVRRLRAELASGNGTQSLLGSASQMLSAMSHFVGVVSAPRREQFAFRHIDFVALDARRVLAILVFADNEVQNRVIEPRRAYEPAELERVANYLNAQFAGRALADIRACLLRELRMAKNEMEQLLAHSVDLASEALVPADADDMVMAGQTRLMGVQDLSDLDRLRELFEVFASKREILQLLERTIQAPGVRIFIGEETGMVSLEDVSLVTAPYTAHGQVLGVLGVIGPKRMAYDRLIPLVQTAADVLGAAMESPGTR.

It belongs to the HrcA family.

Functionally, negative regulator of class I heat shock genes (grpE-dnaK-dnaJ and groELS operons). Prevents heat-shock induction of these operons. In Xanthomonas oryzae pv. oryzae (strain KACC10331 / KXO85), this protein is Heat-inducible transcription repressor HrcA.